The sequence spans 302 residues: Probable 2-(5''-triphosphoribosyl)-3'-dephosphocoenzyme-A synthase (302 aa).

Belongs to the CitG/MdcB family.

The catalysed reaction is 3'-dephospho-CoA + ATP = 2'-(5''-triphospho-alpha-D-ribosyl)-3'-dephospho-CoA + adenine. This chain is Probable 2-(5''-triphosphoribosyl)-3'-dephosphocoenzyme-A synthase, found in Albidiferax ferrireducens (strain ATCC BAA-621 / DSM 15236 / T118) (Rhodoferax ferrireducens).